The primary structure comprises 400 residues: Bifunctional enzyme IspD/IspF (400 aa).

A 2-C-methyl-D-erythritol 4-phosphate cytidylyltransferase region spans residues 1–235 (MSLWTVLLAA…LAEAAAPPVP (235 aa)). Positions 236 to 400 (VTGYGYDVHR…VALVSGWRRP (165 aa)) are 2-C-methyl-D-erythritol 2,4-cyclodiphosphate synthase. A divalent metal cation-binding residues include Asp-242 and His-244. 4-CDP-2-C-methyl-D-erythritol 2-phosphate-binding positions include 242–244 (DVH) and 276–277 (HS). His-284 lines the a divalent metal cation pocket. Residues 298–300 (DIG), 303–307 (FPDSN), 374–377 (TTEE), and Phe-381 each bind 4-CDP-2-C-methyl-D-erythritol 2-phosphate.

In the N-terminal section; belongs to the IspD/TarI cytidylyltransferase family. IspD subfamily. The protein in the C-terminal section; belongs to the IspF family. A divalent metal cation is required as a cofactor.

It carries out the reaction 2-C-methyl-D-erythritol 4-phosphate + CTP + H(+) = 4-CDP-2-C-methyl-D-erythritol + diphosphate. It catalyses the reaction 4-CDP-2-C-methyl-D-erythritol 2-phosphate = 2-C-methyl-D-erythritol 2,4-cyclic diphosphate + CMP. It functions in the pathway isoprenoid biosynthesis; isopentenyl diphosphate biosynthesis via DXP pathway; isopentenyl diphosphate from 1-deoxy-D-xylulose 5-phosphate: step 2/6. Its pathway is isoprenoid biosynthesis; isopentenyl diphosphate biosynthesis via DXP pathway; isopentenyl diphosphate from 1-deoxy-D-xylulose 5-phosphate: step 4/6. Its function is as follows. Bifunctional enzyme that catalyzes the formation of 4-diphosphocytidyl-2-C-methyl-D-erythritol from CTP and 2-C-methyl-D-erythritol 4-phosphate (MEP) (IspD), and catalyzes the conversion of 4-diphosphocytidyl-2-C-methyl-D-erythritol 2-phosphate (CDP-ME2P) to 2-C-methyl-D-erythritol 2,4-cyclodiphosphate (ME-CPP) with a corresponding release of cytidine 5-monophosphate (CMP) (IspF). This Solidesulfovibrio magneticus (strain ATCC 700980 / DSM 13731 / RS-1) (Desulfovibrio magneticus) protein is Bifunctional enzyme IspD/IspF.